A 171-amino-acid polypeptide reads, in one-letter code: MSLKQYSEEQLKEMALVEIAYEIFSEHKKPITFQELTDQVASLLGMGKEELEDRIAQFYTDLNIDGRFLALSDQTWGLRSWYPYDQLDEETQPTVKAKKKKAKKAVEEDLDLDEFEEIDEDDILLDDVEEDLDIDADEFDEIDEADDDELDDLEDEILDDDEDFDEEEDEE.

The 68-residue stretch at 14–81 (MALVEIAYEI…SDQTWGLRSW (68 aa)) folds into the HTH HARE-type domain. A disordered region spans residues 138–171 (EFDEIDEADDDELDDLEDEILDDDEDFDEEEDEE).

The protein belongs to the RpoE family. RNAP is composed of a core of 2 alpha, a beta and a beta' subunits. The core is associated with a delta subunit and one of several sigma factors.

Participates in both the initiation and recycling phases of transcription. In the presence of the delta subunit, RNAP displays an increased specificity of transcription, a decreased affinity for nucleic acids, and an increased efficiency of RNA synthesis because of enhanced recycling. This is Probable DNA-directed RNA polymerase subunit delta from Bacillus licheniformis (strain ATCC 14580 / DSM 13 / JCM 2505 / CCUG 7422 / NBRC 12200 / NCIMB 9375 / NCTC 10341 / NRRL NRS-1264 / Gibson 46).